The primary structure comprises 31 residues: Photosystem II reaction center protein T (31 aa).

The chain crosses the membrane as a helical span at residues 3–23 (SVAYILVLTMTLAVLFFAIAF).

The protein belongs to the PsbT family. PSII is composed of 1 copy each of membrane proteins PsbA, PsbB, PsbC, PsbD, PsbE, PsbF, PsbH, PsbI, PsbJ, PsbK, PsbL, PsbM, PsbT, PsbX, PsbY, PsbZ, Psb30/Ycf12, peripheral proteins PsbO, CyanoQ (PsbQ), PsbU, PsbV and a large number of cofactors. It forms dimeric complexes.

Its subcellular location is the cellular thylakoid membrane. Functionally, found at the monomer-monomer interface of the photosystem II (PS II) dimer, plays a role in assembly and dimerization of PSII. PSII is a light-driven water plastoquinone oxidoreductase, using light energy to abstract electrons from H(2)O, generating a proton gradient subsequently used for ATP formation. The protein is Photosystem II reaction center protein T of Rippkaea orientalis (strain PCC 8801 / RF-1) (Cyanothece sp. (strain PCC 8801)).